A 192-amino-acid polypeptide reads, in one-letter code: Thymidine kinase (192 aa).

Residues 9-16 (SAMNAGKS) and 87-90 (DECQ) each bind ATP. The active-site Proton acceptor is E88. Residues C145, C147, C182, and H185 each coordinate Zn(2+).

The protein belongs to the thymidine kinase family. In terms of assembly, homotetramer.

It is found in the cytoplasm. It carries out the reaction thymidine + ATP = dTMP + ADP + H(+). The sequence is that of Thymidine kinase from Aliivibrio fischeri (strain ATCC 700601 / ES114) (Vibrio fischeri).